Here is a 252-residue protein sequence, read N- to C-terminus: 5'-nucleotidase SurE (252 aa).

Residues aspartate 8, aspartate 9, serine 39, and asparagine 91 each contribute to the a divalent metal cation site.

This sequence belongs to the SurE nucleotidase family. A divalent metal cation is required as a cofactor.

The protein resides in the cytoplasm. It catalyses the reaction a ribonucleoside 5'-phosphate + H2O = a ribonucleoside + phosphate. Its function is as follows. Nucleotidase that shows phosphatase activity on nucleoside 5'-monophosphates. The polypeptide is 5'-nucleotidase SurE (Bordetella petrii (strain ATCC BAA-461 / DSM 12804 / CCUG 43448)).